Consider the following 264-residue polypeptide: Expansin-B3 (264 aa).

A signal peptide spans M1 to A25. The 109-residue stretch at G54–K162 folds into the Expansin-like EG45 domain. Intrachain disulfides connect C57–C86, C89–C157, and C94–C100. An Expansin-like CBD domain is found at F175–S256.

Belongs to the expansin family. Expansin B subfamily.

It is found in the secreted. The protein resides in the cell wall. It localises to the membrane. Functionally, may cause loosening and extension of plant cell walls by disrupting non-covalent bonding between cellulose microfibrils and matrix glucans. No enzymatic activity has been found. In Arabidopsis thaliana (Mouse-ear cress), this protein is Expansin-B3 (EXPB3).